The chain runs to 316 residues: Olfactory receptor class A-like protein 1 (316 aa).

At 1–8 the chain is on the extracellular side; that stretch reads MDLCVTIK. Residues 9–29 form a helical membrane-spanning segment; that stretch reads GVSFLLQAGLGILANALVLLA. Topologically, residues 30 to 39 are cytoplasmic; that stretch reads YAHIRLAEAR. Residues 40–60 traverse the membrane as a helical segment; that stretch reads LQPVDAILCHLALVDLLLLLT. Topologically, residues 61–97 are extracellular; it reads RGVPQTMTVFGMRNLLDDTGCKVVIYTYRIARALSVC. A disulfide bridge links cysteine 81 with cysteine 169. The helical transmembrane segment at 98–118 threads the bilayer; sequence ITCMLSVFQAVTVAPAAGPLL. At 119–132 the chain is on the cytoplasmic side; the sequence is SGVKARLPQLLAPT. Residues 133–153 traverse the membrane as a helical segment; sequence FAALWFINMAVCIAAPFFSVA. Over 154–187 the chain is Extracellular; sequence PRNGTVPPFTLNLGFCHVDFHDNLSYVLNGVAVS. N-linked (GlcNAc...) asparagine glycosylation is found at asparagine 156 and asparagine 176. The chain crosses the membrane as a helical span at residues 188–208; the sequence is VRDFAFVGAMLASSGFILLLL. Residues 209–233 lie on the Cytoplasmic side of the membrane; it reads HRHRRQVRAVRRSQGSTMETRAART. A helical membrane pass occupies residues 234 to 254; sequence VLMLVILYSVFFGIDNVIWIY. Residues 255–264 are Extracellular-facing; that stretch reads MLTVAQVPPV. A helical membrane pass occupies residues 265 to 285; the sequence is VADMRVFFSSCYASLSPFLII. At 286–316 the chain is on the cytoplasmic side; the sequence is SSNRKLKARMVCATSEQERQAEDGKNSSGKN.

It belongs to the G-protein coupled receptor 1 family. Highly expressed in the olfactory rosette where it localizes to a subset of olfactory sensory neurons, mainly in the apical region of the neuroepithelium. Not detected in other tissues tested.

Its subcellular location is the cell membrane. Functionally, probable pheromone receptor. Shows high specificity for 4-hydroxyphenylacetic acid. Activation of the receptor stimulates intracellular calcium release. The protein is Olfactory receptor class A-like protein 1 of Danio rerio (Zebrafish).